Here is a 521-residue protein sequence, read N- to C-terminus: 3,4-dihydroxyphenylacetaldehyde synthase (521 aa).

The residue at position 306 (Lys-306) is an N6-(pyridoxal phosphate)lysine.

It belongs to the group II decarboxylase family. The cofactor is pyridoxal 5'-phosphate. In terms of tissue distribution, highly expressed in the cuticle and midgut. Low expression in the head and thorax.

The enzyme catalyses L-dopa + O2 + H2O + H(+) = 3,4-dihydroxyphenylacetaldehyde + H2O2 + NH4(+) + CO2. Catalyzes the decarboxylation-oxidative deamination of L-3,4-dihydroxyphenylalanine (L-DOPA) to 3,4-dihydroxylphenylacetaldehyde (DHPAA). Involved in cuticle development. Probably responsible for the protein cross-linking during the development of flexible cuticles. This chain is 3,4-dihydroxyphenylacetaldehyde synthase, found in Aedes aegypti (Yellowfever mosquito).